Here is a 963-residue protein sequence, read N- to C-terminus: uncharacterized protein (963 aa).

2 coiled-coil regions span residues 176–236 (NGRN…HIRM) and 373–467 (DYEW…KKTV). Residues 468–488 (IAAGMLFIVLFSLLQQWIPAI) form a helical membrane-spanning segment. Coiled coils occupy residues 536–570 (RNKQ…AEMA) and 647–789 (ALHT…LEAS).

It is found in the cell membrane. This is an uncharacterized protein from Bacillus subtilis (strain 168).